Consider the following 318-residue polypeptide: Pyrimidine-specific ribonucleoside hydrolase RihA (318 aa).

Residue His-240 is part of the active site.

This sequence belongs to the IUNH family. RihA subfamily.

Functionally, hydrolyzes cytidine or uridine to ribose and cytosine or uracil, respectively. The sequence is that of Pyrimidine-specific ribonucleoside hydrolase RihA from Shewanella oneidensis (strain ATCC 700550 / JCM 31522 / CIP 106686 / LMG 19005 / NCIMB 14063 / MR-1).